A 238-amino-acid chain; its full sequence is Uridylate kinase (238 aa).

Residue 12-15 coordinates ATP; that stretch reads KLSG. G54 provides a ligand contact to UMP. Residues G55 and R59 each contribute to the ATP site. Residues D74 and 135-142 contribute to the UMP site; that span reads TGNPFFTT. ATP is bound by residues T162, Y168, and D171.

It belongs to the UMP kinase family. As to quaternary structure, homohexamer.

It is found in the cytoplasm. The catalysed reaction is UMP + ATP = UDP + ADP. The protein operates within pyrimidine metabolism; CTP biosynthesis via de novo pathway; UDP from UMP (UMPK route): step 1/1. Inhibited by UTP. Functionally, catalyzes the reversible phosphorylation of UMP to UDP. This Bordetella avium (strain 197N) protein is Uridylate kinase.